The sequence spans 562 residues: Alpha-amylase 2 (562 aa).

Asn-236 serves as a coordination point for Ca(2+). The Nucleophile role is filled by Asp-309. The active-site Proton donor is the Glu-338.

This sequence belongs to the glycosyl hydrolase 13 family. In terms of assembly, monomer. The cofactor is Ca(2+).

It localises to the cytoplasm. It catalyses the reaction Endohydrolysis of (1-&gt;4)-alpha-D-glucosidic linkages in polysaccharides containing three or more (1-&gt;4)-alpha-linked D-glucose units.. The polypeptide is Alpha-amylase 2 (amyB) (Dictyoglomus thermophilum (strain ATCC 35947 / DSM 3960 / H-6-12)).